Here is a 192-residue protein sequence, read N- to C-terminus: Probable cobalt-precorrin-6B C(15)-methyltransferase (decarboxylating) (192 aa).

S-adenosyl-L-methionine-binding positions include T17, 41–45, D62, and A91; that span reads GCGTG.

Belongs to the methyltransferase superfamily. Archaeal-type CbiT family. Homotetramer.

The catalysed reaction is Co-precorrin-6B + S-adenosyl-L-methionine = Co-precorrin-7 + S-adenosyl-L-homocysteine + CO2. It participates in cofactor biosynthesis; adenosylcobalamin biosynthesis; cob(II)yrinate a,c-diamide from sirohydrochlorin (anaerobic route): step 8/10. Functionally, catalyzes the methylation of C-15 in cobalt-precorrin-6B followed by the decarboxylation of C-12 to form cobalt-precorrin-7. The sequence is that of Probable cobalt-precorrin-6B C(15)-methyltransferase (decarboxylating) from Methanothermobacter thermautotrophicus (strain ATCC 29096 / DSM 1053 / JCM 10044 / NBRC 100330 / Delta H) (Methanobacterium thermoautotrophicum).